The sequence spans 87 residues: Small ribosomal subunit protein bS20 (87 aa).

The protein belongs to the bacterial ribosomal protein bS20 family.

Its function is as follows. Binds directly to 16S ribosomal RNA. In Roseobacter denitrificans (strain ATCC 33942 / OCh 114) (Erythrobacter sp. (strain OCh 114)), this protein is Small ribosomal subunit protein bS20.